A 1391-amino-acid polypeptide reads, in one-letter code: DNA-directed RNA polymerase subunit beta' (1391 aa).

Zn(2+) is bound by residues Cys72, Cys74, Cys87, and Cys90. Residues Asp462, Asp464, and Asp466 each coordinate Mg(2+). Residues Cys816, Cys890, Cys897, and Cys900 each coordinate Zn(2+).

This sequence belongs to the RNA polymerase beta' chain family. In terms of assembly, the RNAP catalytic core consists of 2 alpha, 1 beta, 1 beta' and 1 omega subunit. When a sigma factor is associated with the core the holoenzyme is formed, which can initiate transcription. Mg(2+) is required as a cofactor. It depends on Zn(2+) as a cofactor.

It carries out the reaction RNA(n) + a ribonucleoside 5'-triphosphate = RNA(n+1) + diphosphate. In terms of biological role, DNA-dependent RNA polymerase catalyzes the transcription of DNA into RNA using the four ribonucleoside triphosphates as substrates. This is DNA-directed RNA polymerase subunit beta' from Neisseria meningitidis serogroup B (strain ATCC BAA-335 / MC58).